The primary structure comprises 206 residues: Transmembrane 4 L6 family member 19 (206 aa).

Topologically, residues 1–16 are cytoplasmic; sequence MLSFSRVVNCSRTCSR. A helical membrane pass occupies residues 17 to 37; sequence FLGLSLGTASLCAAGANIALL. The Extracellular portion of the chain corresponds to 38–54; it reads FPNWDVTYLMRGLIGKH. A helical transmembrane segment spans residues 55–75; it reads AMLGSGLWGGGLMVLLAATLI. Residues 76 to 89 lie on the Cytoplasmic side of the membrane; sequence SMTGSFSKSAPCLQ. Residues 90–110 form a helical membrane-spanning segment; that stretch reads VLIALLSSGLALLGAVICFVT. Residues 111–171 lie on the Extracellular side of the membrane; sequence SGVALKDGPF…PSKAVVWHVA (61 aa). N-linked (GlcNAc...) asparagine glycosylation is present at N129. Residues 172 to 192 form a helical membrane-spanning segment; the sequence is FFSILLCISLLQLLLVAIHLV. Residues 182–192 form an important for homodimerization region; the sequence is LQLLLVAIHLV. The Cytoplasmic portion of the chain corresponds to 193 to 206; sequence NSILGLFCSFCEKH.

It belongs to the L6 tetraspanin family. In terms of assembly, may form homodimers and homooligomers. Interacts with integrins ITGAV and ITGB3. Interacts with components of members of the V0 complex of vacuolar(H+)-ATPase (V-ATPase), including ATP6V0B and ATP6V0D2; this interaction inhibits V1-V0 complex assembly. In terms of tissue distribution, predominantly expressed in osteoclasts (at protein level). Also expressed in white adipose tissue, as well as in bone marrow-derived macrophages.

It localises to the lysosome membrane. It is found in the cytoplasm. Its subcellular location is the cytoskeleton. The protein resides in the cell projection. The protein localises to the filopodium. Functionally, negatively regulates vacuolar (H+)-ATPase (V-ATPase) activity by interacting with members of V-ATPase V0 complex and hence inhibiting V1-V0 assembly. Required for multinucleation during osteoclast differentiation. In Mus musculus (Mouse), this protein is Transmembrane 4 L6 family member 19 (Tm4sf19).